The chain runs to 343 residues: NADH-quinone oxidoreductase subunit H (343 aa).

Helical transmembrane passes span 5–25 (FIIEKSVVIVAVFALTMLMAM), 76–96 (FLFVVGPAIAMSTALMTSAVI), 119–139 (ALLYIFAVVSVGVYGIMIGGW), 158–178 (VSYEVAMGLSMIALLMMTGTL), 190–210 (MNWNVFYQPVSFLIFLICAFA), 243–263 (LFAEYANMFISSAILAILFFG), 284–304 (ILGFLALFIKICGFIFFYMWV), and 323–343 (ILIPLAILNIMVTGICLLLFK).

Belongs to the complex I subunit 1 family. NDH-1 is composed of 14 different subunits. Subunits NuoA, H, J, K, L, M, N constitute the membrane sector of the complex.

It localises to the cell inner membrane. It carries out the reaction a quinone + NADH + 5 H(+)(in) = a quinol + NAD(+) + 4 H(+)(out). In terms of biological role, NDH-1 shuttles electrons from NADH, via FMN and iron-sulfur (Fe-S) centers, to quinones in the respiratory chain. The immediate electron acceptor for the enzyme in this species is believed to be ubiquinone. Couples the redox reaction to proton translocation (for every two electrons transferred, four hydrogen ions are translocated across the cytoplasmic membrane), and thus conserves the redox energy in a proton gradient. This subunit may bind ubiquinone. This is NADH-quinone oxidoreductase subunit H from Flavobacterium psychrophilum (strain ATCC 49511 / DSM 21280 / CIP 103535 / JIP02/86).